A 311-amino-acid chain; its full sequence is Homoserine kinase (311 aa).

96–106 (PLARGLGSSAA) provides a ligand contact to ATP.

The protein belongs to the GHMP kinase family. Homoserine kinase subfamily.

The protein resides in the cytoplasm. It carries out the reaction L-homoserine + ATP = O-phospho-L-homoserine + ADP + H(+). It functions in the pathway amino-acid biosynthesis; L-threonine biosynthesis; L-threonine from L-aspartate: step 4/5. Catalyzes the ATP-dependent phosphorylation of L-homoserine to L-homoserine phosphate. The chain is Homoserine kinase from Natranaerobius thermophilus (strain ATCC BAA-1301 / DSM 18059 / JW/NM-WN-LF).